Here is a 256-residue protein sequence, read N- to C-terminus: C-8 sterol isomerase (256 aa).

The tract at residues 1 to 31 is disordered; that stretch reads MPPKKQSSSGGNKPSGSGSSSGRSSSGSSCR. Residues 7 to 30 are compositionally biased toward low complexity; that stretch reads SSSGGNKPSGSGSSSGRSSSGSSC. Residues 40-60 traverse the membrane as a helical segment; that stretch reads IGGWLKFFAILFALVAPIAYV.

The protein belongs to the ERG2 family.

The protein localises to the endoplasmic reticulum membrane. Its pathway is steroid metabolism; ergosterol biosynthesis; ergosterol from zymosterol: step 2/5. In terms of biological role, catalyzes the reaction which results in unsaturation at C-7 in the B ring of sterols. This chain is C-8 sterol isomerase (erg-1), found in Neurospora crassa (strain ATCC 24698 / 74-OR23-1A / CBS 708.71 / DSM 1257 / FGSC 987).